The chain runs to 415 residues: Serine/threonine-protein kinase H1 homolog (415 aa).

The disordered stretch occupies residues 1-70 (MGCMSSKLVP…SNRKVKKYRD (70 aa)). The span at 41–50 (GPRDPTKDPK) shows a compositional bias: basic and acidic residues. Residues 80 to 334 (YDIKALIGRG…AADALKHQWL (255 aa)) enclose the Protein kinase domain. Residues 86-94 (IGRGNFSKV) and Lys-109 each bind ATP. The active-site Proton acceptor is the Asp-198. Positions 353–362 (NLIHRQSTRA) are enriched in polar residues. Residues 353-415 (NLIHRQSTRA…DVQADLASLG (63 aa)) form a disordered region. Residues 363-385 (NSTKSAKSTRSTKSNKSNRSGRS) show a composition bias toward low complexity. Residues 386–406 (LRSEHRRVMPDEIDELHRDPD) show a composition bias toward basic and acidic residues.

The protein belongs to the protein kinase superfamily. CAMK Ser/Thr protein kinase family.

The enzyme catalyses L-seryl-[protein] + ATP = O-phospho-L-seryl-[protein] + ADP + H(+). It carries out the reaction L-threonyl-[protein] + ATP = O-phospho-L-threonyl-[protein] + ADP + H(+). This Pinctada fucata (Akoya pearl oyster) protein is Serine/threonine-protein kinase H1 homolog (PSKH1).